Consider the following 359-residue polypeptide: 3-dehydroquinate synthase (359 aa).

NAD(+) is bound by residues 71–76 (DGEQYK), 105–109 (GVIGD), 129–130 (TT), lysine 142, lysine 151, and 169–172 (CLAT). Residues glutamate 184, histidine 247, and histidine 264 each contribute to the Zn(2+) site.

It belongs to the sugar phosphate cyclases superfamily. Dehydroquinate synthase family. It depends on Co(2+) as a cofactor. Requires Zn(2+) as cofactor. NAD(+) serves as cofactor.

The protein resides in the cytoplasm. The catalysed reaction is 7-phospho-2-dehydro-3-deoxy-D-arabino-heptonate = 3-dehydroquinate + phosphate. It participates in metabolic intermediate biosynthesis; chorismate biosynthesis; chorismate from D-erythrose 4-phosphate and phosphoenolpyruvate: step 2/7. Its function is as follows. Catalyzes the conversion of 3-deoxy-D-arabino-heptulosonate 7-phosphate (DAHP) to dehydroquinate (DHQ). The sequence is that of 3-dehydroquinate synthase from Baumannia cicadellinicola subsp. Homalodisca coagulata.